The primary structure comprises 476 residues: Glutamyl-tRNA(Gln) amidotransferase subunit A (476 aa).

Residues K77 and S152 each act as charge relay system in the active site. S176 serves as the catalytic Acyl-ester intermediate.

Belongs to the amidase family. GatA subfamily. Heterotrimer of A, B and C subunits.

It catalyses the reaction L-glutamyl-tRNA(Gln) + L-glutamine + ATP + H2O = L-glutaminyl-tRNA(Gln) + L-glutamate + ADP + phosphate + H(+). Functionally, allows the formation of correctly charged Gln-tRNA(Gln) through the transamidation of misacylated Glu-tRNA(Gln) in organisms which lack glutaminyl-tRNA synthetase. The reaction takes place in the presence of glutamine and ATP through an activated gamma-phospho-Glu-tRNA(Gln). The polypeptide is Glutamyl-tRNA(Gln) amidotransferase subunit A (Acidobacterium capsulatum (strain ATCC 51196 / DSM 11244 / BCRC 80197 / JCM 7670 / NBRC 15755 / NCIMB 13165 / 161)).